Consider the following 223-residue polypeptide: Voltage-dependent calcium channel gamma-1 subunit (223 aa).

Residues M1–R10 lie on the Cytoplasmic side of the membrane. Residues V11 to T29 form a helical membrane-spanning segment. At D30 to A109 the chain is on the extracellular side. N-linked (GlcNAc...) asparagine glycosylation is found at N43 and N80. Cysteines 57 and 81 form a disulfide. The chain crosses the membrane as a helical span at residues A110–F130. The Cytoplasmic portion of the chain corresponds to G131–D135. Residues Y136–V156 traverse the membrane as a helical segment. Residues E157–S180 lie on the Extracellular side of the membrane. The chain crosses the membrane as a helical span at residues W181 to L205. At P206–H223 the chain is on the cytoplasmic side.

It belongs to the PMP-22/EMP/MP20 family. CACNG subfamily. In terms of assembly, component of a calcium channel complex consisting of a pore-forming alpha subunit (CACNA1S) and the ancillary subunits CACNB1 or CACNB2, CACNG1 and CACNA2D1. The channel complex contains alpha, beta, gamma and delta subunits in a 1:1:1:1 ratio, i.e. it contains either CACNB1 or CACNB2. N-glycosylated. In terms of tissue distribution, skeletal muscle.

Its subcellular location is the cell membrane. It localises to the sarcolemma. Its function is as follows. Regulatory subunit of the voltage-gated calcium channel that gives rise to L-type calcium currents in skeletal muscle. Regulates channel inactivation kinetics. This Rattus norvegicus (Rat) protein is Voltage-dependent calcium channel gamma-1 subunit (Cacng1).